The chain runs to 192 residues: Phosphoheptose isomerase (192 aa).

Positions leucine 35 to asparagine 192 constitute an SIS domain. A substrate-binding site is contributed by asparagine 50 to glycine 52. Zn(2+) contacts are provided by histidine 59 and glutamate 63. Substrate-binding positions include glutamate 63, asparagine 92–aspartate 93, serine 118–serine 120, serine 123, and glutamine 170. Zn(2+) contacts are provided by glutamine 170 and histidine 178.

It belongs to the SIS family. GmhA subfamily. Homotetramer. The cofactor is Zn(2+).

The protein localises to the cytoplasm. It catalyses the reaction 2 D-sedoheptulose 7-phosphate = D-glycero-alpha-D-manno-heptose 7-phosphate + D-glycero-beta-D-manno-heptose 7-phosphate. The protein operates within carbohydrate biosynthesis; D-glycero-D-manno-heptose 7-phosphate biosynthesis; D-glycero-alpha-D-manno-heptose 7-phosphate and D-glycero-beta-D-manno-heptose 7-phosphate from sedoheptulose 7-phosphate: step 1/1. Functionally, catalyzes the isomerization of sedoheptulose 7-phosphate in D-glycero-D-manno-heptose 7-phosphate. The polypeptide is Phosphoheptose isomerase (Helicobacter pylori (strain Shi470)).